We begin with the raw amino-acid sequence, 166 residues long: Ubiquitin-conjugating enzyme E2 7 (166 aa).

Ala-2 bears the N-acetylalanine mark. The region spanning Gln-4–Glu-164 is the UBC core domain. Catalysis depends on Cys-89, which acts as the Glycyl thioester intermediate.

Belongs to the ubiquitin-conjugating enzyme family.

The catalysed reaction is S-ubiquitinyl-[E1 ubiquitin-activating enzyme]-L-cysteine + [E2 ubiquitin-conjugating enzyme]-L-cysteine = [E1 ubiquitin-activating enzyme]-L-cysteine + S-ubiquitinyl-[E2 ubiquitin-conjugating enzyme]-L-cysteine.. It participates in protein modification; protein ubiquitination. In terms of biological role, accepts the ubiquitin from the E1 complex and catalyzes its covalent attachment to other proteins. Involved in the formation of multiubiquitin chains. Signal the protein for selective degradation. The sequence is that of Ubiquitin-conjugating enzyme E2 7 (UBC7) from Arabidopsis thaliana (Mouse-ear cress).